The sequence spans 129 residues: Antimicrobial peptide NK-lysin (129 aa).

An N-terminal signal peptide occupies residues 1 to 6; it reads PGLAFS. The propeptide occupies 7 to 46; sequence GLTPEHSALARAHPCDGEQFCQNLAPEDPQGDQLLQREEL. One can recognise a Saposin B-type domain in the interval 46-126; that stretch reads LGLICESCRK…VDIKICKEKT (81 aa). 3 cysteine pairs are disulfide-bonded: Cys50–Cys122, Cys53–Cys116, and Cys81–Cys91. A propeptide spanning residues 125–129 is cleaved from the precursor; that stretch reads KTGLI.

As to expression, cytotoxic T and NK cells.

The protein localises to the secreted. In terms of biological role, may be an effector molecule of cytotoxic activity. High activity against E.coli and B.megaterium, moderate against A.calcoaceticus and S.pyogenes. No activity against P.aeruginosa, S.aureus and Salmonella. Has some antifungal activity against C.albicans. The chain is Antimicrobial peptide NK-lysin (NKL) from Sus scrofa (Pig).